Here is a 637-residue protein sequence, read N- to C-terminus: Phosphomethylpyrimidine synthase (637 aa).

Substrate is bound by residues asparagine 242, methionine 271, tyrosine 300, histidine 336, serine 356–glycine 358, aspartate 397–arginine 400, and glutamate 436. Histidine 440 provides a ligand contact to Zn(2+). Tyrosine 463 lines the substrate pocket. Histidine 504 lines the Zn(2+) pocket. [4Fe-4S] cluster is bound by residues cysteine 584, cysteine 587, and cysteine 592.

It belongs to the ThiC family. As to quaternary structure, homodimer. [4Fe-4S] cluster serves as cofactor.

It carries out the reaction 5-amino-1-(5-phospho-beta-D-ribosyl)imidazole + S-adenosyl-L-methionine = 4-amino-2-methyl-5-(phosphooxymethyl)pyrimidine + CO + 5'-deoxyadenosine + formate + L-methionine + 3 H(+). Its pathway is cofactor biosynthesis; thiamine diphosphate biosynthesis. Its function is as follows. Catalyzes the synthesis of the hydroxymethylpyrimidine phosphate (HMP-P) moiety of thiamine from aminoimidazole ribotide (AIR) in a radical S-adenosyl-L-methionine (SAM)-dependent reaction. In Herminiimonas arsenicoxydans, this protein is Phosphomethylpyrimidine synthase.